The following is a 394-amino-acid chain: p-hydroxybenzoate hydroxylase (394 aa).

FAD-binding positions include Ser13, Glu32, 42-47 (RIRAGV), and Gln102. Residues Tyr201, 212-214 (SQR), and Tyr222 each bind substrate. Asp286 serves as a coordination point for FAD. Pro293 contributes to the substrate binding site. Residue 299 to 300 (LN) coordinates FAD.

Belongs to the aromatic-ring hydroxylase family. In terms of assembly, homodimer. Requires FAD as cofactor.

The catalysed reaction is 4-hydroxybenzoate + NADPH + O2 + H(+) = 3,4-dihydroxybenzoate + NADP(+) + H2O. The protein operates within aromatic compound metabolism; benzoate degradation via hydroxylation; 3,4-dihydroxybenzoate from benzoate: step 2/2. In terms of biological role, catalyzes the incorporation of an atom of dioxygen into p-hydroxybenzoate (p-OHB) to form 3,4-dihydroxybenzoate (3,4DOHB). The reaction occurs in two parts: reduction of the flavin adenine dinucleotide (FAD) in the enzyme by reduced nicotinamide adenine dinucleotide phosphate (NADPH) in response to binding p-hydroxybenzoate to the enzyme and oxidation of reduced FAD with oxygen to form a hydroperoxide, which then oxygenates p-hydroxybenzoate. The protein is p-hydroxybenzoate hydroxylase of Pseudomonas aeruginosa (strain ATCC 15692 / DSM 22644 / CIP 104116 / JCM 14847 / LMG 12228 / 1C / PRS 101 / PAO1).